We begin with the raw amino-acid sequence, 416 residues long: Probable sarcosine oxidase (416 aa).

10–40 (DVIVVGAGVMGSSAAYQLAKRGQKTLLLEQF) serves as a coordination point for FAD. At cysteine 325 the chain carries S-8alpha-FAD cysteine.

It belongs to the MSOX/MTOX family. The cofactor is FAD.

It carries out the reaction sarcosine + O2 + H2O = formaldehyde + glycine + H2O2. The protein is Probable sarcosine oxidase of Arabidopsis thaliana (Mouse-ear cress).